Consider the following 185-residue polypeptide: Large ribosomal subunit protein uL5 (185 aa).

Belongs to the universal ribosomal protein uL5 family. Part of the 50S ribosomal subunit; part of the 5S rRNA/L5/L18/L25 subcomplex. Contacts the 5S rRNA and the P site tRNA. Forms a bridge to the 30S subunit in the 70S ribosome.

This is one of the proteins that bind and probably mediate the attachment of the 5S RNA into the large ribosomal subunit, where it forms part of the central protuberance. In the 70S ribosome it contacts protein S13 of the 30S subunit (bridge B1b), connecting the 2 subunits; this bridge is implicated in subunit movement. Contacts the P site tRNA; the 5S rRNA and some of its associated proteins might help stabilize positioning of ribosome-bound tRNAs. The sequence is that of Large ribosomal subunit protein uL5 from Sinorhizobium medicae (strain WSM419) (Ensifer medicae).